The sequence spans 333 residues: Alpha-N-acetylgalactosaminide alpha-2,6-sialyltransferase 6 (333 aa).

Polar residues predominate over residues Met-1–Pro-12. The tract at residues Met-1 to Pro-27 is disordered. Topologically, residues Met-1 to Ser-43 are cytoplasmic. Residues Ala-44–Ala-64 traverse the membrane as a helical; Signal-anchor for type II membrane protein segment. Residues Asn-65–Thr-333 lie on the Lumenal side of the membrane. The N-linked (GlcNAc...) asparagine glycan is linked to Asn-98. Cys-108 and Cys-256 are disulfide-bonded.

It belongs to the glycosyltransferase 29 family. Widely expressed, the gene expression is most abundant in colon, brain, liver, and heart.

The protein resides in the golgi apparatus membrane. It carries out the reaction a ganglioside GM1b (d18:1(4E)) + CMP-N-acetyl-beta-neuraminate = a ganglioside GD1alpha (d18:1(4E)) + CMP + H(+). It catalyses the reaction a ganglioside GD1a (d18:1(4E)) + CMP-N-acetyl-beta-neuraminate = a ganglioside GT1aalpha (d18:1(4E)) + CMP + H(+). The enzyme catalyses a ganglioside GT1b (d18:1(4E)) + CMP-N-acetyl-beta-neuraminate = a ganglioside GQ1balpha (d18:1(4E)) + CMP + H(+). The catalysed reaction is N-acetyl-alpha-neuraminosyl-(2-&gt;3)-beta-D-galactosyl-(1-&gt;3)-N-acetyl-beta-D-glucosaminyl-(1-&gt;3)-beta-D-galactosyl-(1-&gt;4)-beta-D-glucosyl-(1&lt;-&gt;1')-N-acyl-sphing-4-enine + CMP-N-acetyl-beta-neuraminate = N-acetyl-alpha-neuraminosyl-(2-&gt;3)-beta-D-galactosyl-(1-&gt;3)-[N-acetyl-alpha-neuraminosyl-(2-&gt;6)]-N-acetyl-beta-D-glucosaminyl-(1-&gt;3)-beta-D-galactosyl-(1-&gt;4)-beta-D-glucosyl-(1&lt;-&gt;1')-N-acyl-sphing-4-enine + CMP + H(+). It carries out the reaction a globoside MSGG + CMP-N-acetyl-beta-neuraminate = a globoside DSGG + CMP + H(+). It catalyses the reaction 3-O-[alpha-Neu5Ac-(2-&gt;3)-beta-D-Gal-(1-&gt;3)-alpha-D-GalNAc]-L-Ser-[protein] + CMP-N-acetyl-beta-neuraminate = a 3-O-{alpha-Neu5Ac-(2-&gt;3)-beta-D-Gal-(1-&gt;3)-[alpha-Neu5Ac-(2-&gt;6)]-alpha-D-GalNAc}-L-seryl-[protein] + CMP + H(+). The enzyme catalyses 3-O-[alpha-Neu5Ac-(2-&gt;3)-beta-D-Gal-(1-&gt;3)-alpha-D-GalNAc]-L-Thr-[protein] + CMP-N-acetyl-beta-neuraminate = a 3-O-{alpha-Neu5Ac-(2-&gt;3)-beta-D-Gal-(1-&gt;3)-[alpha-Neu5Ac-(2-&gt;6)]-alpha-D-GalNAc}-L-threonyl-[protein] + CMP + H(+). In terms of biological role, transfers the sialyl group (N-acetyl-alpha-neuraminyl or NeuAc) from CMP-NeuAc onto glycolipids, forming an alpha-2,6-linkage. Produces branched type disialyl structures by transfer of a sialyl group onto the GalNAc or GlcNAc residue inside backbone core chains having a terminal sialic acid with an alpha-2,3-linkage on Gal. ST6GalNAcVI prefers glycolipids to glycoproteins, predominantly catalyzing the biosynthesis of ganglioside GD1alpha from GM1b. Also has activity toward GD1a and GT1b, and can generate DSGG (disialylgalactosylgloboside) from MSGG (monosialylgalactosylgloboside). Besides GMb1, MSGG and other glycolipids, it shows activity towards sialyl Lc4Cer generating disialyl Lc4Cer, which can lead to the synthesis of disialyl Lewis a (Le(a)), suggested to be a cancer-associated antigen. The chain is Alpha-N-acetylgalactosaminide alpha-2,6-sialyltransferase 6 (St6galnac6) from Mus musculus (Mouse).